Reading from the N-terminus, the 120-residue chain is NAD(P)H-quinone oxidoreductase subunit 3, chloroplastic (120 aa).

Transmembrane regions (helical) follow at residues 7-27 (YETFWIFLLISSLMPILAFLI), 64-84 (MFALVFVVFDVETVFLYPWAM), and 88-108 (ILGISTFIEASIFVLILIVGS).

This sequence belongs to the complex I subunit 3 family. In terms of assembly, NDH is composed of at least 16 different subunits, 5 of which are encoded in the nucleus.

The protein resides in the plastid. It localises to the chloroplast thylakoid membrane. The enzyme catalyses a plastoquinone + NADH + (n+1) H(+)(in) = a plastoquinol + NAD(+) + n H(+)(out). The catalysed reaction is a plastoquinone + NADPH + (n+1) H(+)(in) = a plastoquinol + NADP(+) + n H(+)(out). In terms of biological role, NDH shuttles electrons from NAD(P)H:plastoquinone, via FMN and iron-sulfur (Fe-S) centers, to quinones in the photosynthetic chain and possibly in a chloroplast respiratory chain. The immediate electron acceptor for the enzyme in this species is believed to be plastoquinone. Couples the redox reaction to proton translocation, and thus conserves the redox energy in a proton gradient. This chain is NAD(P)H-quinone oxidoreductase subunit 3, chloroplastic, found in Cycas taitungensis (Prince sago).